A 398-amino-acid chain; its full sequence is MTGKLYGNKDNFRTQKVLIAAKLANKTVTLAGDAAPADKFPLGVTPAFEGDALLFGAESIGLHLTGTSANAETVQWLQFAEGYLLPAVLGYVLPSVSAANFDKKTVEQYKNELNGQLQVLDRVLVKKTYLVGERLSLADVSVALDLLPAFQYVLDANARKSIVNVTRWFRTVVNQPAVKEVLGEVSLASSVAQFNQAKFTELSAKVAKSAPKAEKPKKEAKPAAAAAQPEDDEPKEEKSKDPFQDMPKGTFVLDNFKRSYSNEDTATKAIPHFWENFDADNWSIWKCEYKYPEDLTLAFMSCNLINGMYQRLEKLKKNAFASMILFGTDNNSTISGIWVWKGDKLAFELSPDWQVDYESYTWTKLDAKSDATKKEVNEYLMWEGDFGGKKFNQGKIFK.

One can recognise a GST C-terminal domain in the interval Gly-66–Phe-199. The interval Ala-210 to Lys-248 is disordered. Residues Pro-211–Lys-221 show a composition bias toward basic and acidic residues. One can recognise an EF-1-gamma C-terminal domain in the interval Ser-239–Lys-398.

In terms of assembly, EF-1 is composed of four subunits: alpha, beta, delta, and gamma. AMPylated by fic-1.

Its function is as follows. Probably plays a role in anchoring the complex to other cellular components. The sequence is that of Probable elongation factor 1-gamma from Caenorhabditis elegans.